We begin with the raw amino-acid sequence, 283 residues long: 1D-myo-inositol 2-acetamido-2-deoxy-alpha-D-glucopyranoside deacetylase (283 aa).

Residues His-7, Asp-10, and His-148 each coordinate Zn(2+).

Belongs to the MshB deacetylase family. The cofactor is Zn(2+).

The enzyme catalyses 1D-myo-inositol 2-acetamido-2-deoxy-alpha-D-glucopyranoside + H2O = 1D-myo-inositol 2-amino-2-deoxy-alpha-D-glucopyranoside + acetate. In terms of biological role, catalyzes the deacetylation of 1D-myo-inositol 2-acetamido-2-deoxy-alpha-D-glucopyranoside (GlcNAc-Ins) in the mycothiol biosynthesis pathway. This chain is 1D-myo-inositol 2-acetamido-2-deoxy-alpha-D-glucopyranoside deacetylase, found in Gordonia bronchialis (strain ATCC 25592 / DSM 43247 / BCRC 13721 / JCM 3198 / KCTC 3076 / NBRC 16047 / NCTC 10667) (Rhodococcus bronchialis).